Here is a 593-residue protein sequence, read N- to C-terminus: Copine-5 (593 aa).

A C2 1 domain is found at 2 to 134; the sequence is EQPEDMASLS…SPGSRLEKPL (133 aa). Ser19 is subject to Phosphoserine. The Ca(2+) site is built by Asp38, Asp44, Asp98, Asp100, Ser103, Lys108, and Asp110. Residue Ser103 is modified to Phosphoserine. The residue at position 140 (Ser140) is a Phosphoserine. Positions 161–284 constitute a C2 2 domain; it reads KCGTIILSAE…ARGQSQFNIY (124 aa). The Ca(2+) site is built by Asp192, Asp198, Asp254, Asp256, and Asp262. A VWFA domain is found at 328–554; that stretch reads NFTVAIDFTA…DVLAEIPDQL (227 aa). Positions 562–593 are disordered; that stretch reads GIRPRPPPAAPTHSPSQSPARTPPASPLHTHI. Low complexity predominate over residues 572–581; that stretch reads PTHSPSQSPA.

Belongs to the copine family. It depends on Ca(2+) as a cofactor. In terms of tissue distribution, expressed in the brain, heart, stomach, spleen, lymph node and testis. Expressed in melanocytes.

Its subcellular location is the perikaryon. The protein resides in the cell projection. In terms of biological role, probable calcium-dependent phospholipid-binding protein that may play a role in calcium-mediated intracellular processes. Plays a role in dendrite formation by melanocytes. This is Copine-5 from Homo sapiens (Human).